Here is a 468-residue protein sequence, read N- to C-terminus: Mitochondrial adenyl nucleotide antiporter SLC25A23 (468 aa).

Positions 1 to 149 (MRGSPGDAER…DHFLLHSLEN (149 aa)) are regulatory N-terminal domain. The Mitochondrial intermembrane portion of the chain corresponds to 1–188 (MRGSPGDAER…EKLTGMWWKQ (188 aa)). The EF-hand 1 domain occupies 9-44 (ERRQRWGRLFEELDSNKDGRVDVHELRQGLARLGGG). Ca(2+)-binding residues include D22, N24, D26, R28, and E33. Residues 34-67 (LRQGLARLGGGNPDPGAQQGISSEGDADPDGGLD) are disordered. Positions 58 to 67 (GDADPDGGLD) are enriched in acidic residues. EF-hand domains follow at residues 77–112 (EREQ…LGIS) and 113–148 (ISLE…HSLE). 5 residues coordinate Ca(2+): D90, N92, D94, H96, and E101. The interval 150–159 (VEDVLYFWKH) is linker region. The segment at 165 to 468 (IGECLTVPDE…MKQALGVTSR (304 aa)) is C-terminal transmembrane transporter domain. Solcar repeat units follow at residues 183–269 (GMWW…IKRA), 277–362 (LHVQ…LKNW), and 374–462 (PGIL…MKQA). Residues 189–206 (LVAGAVAGAVSRTGTAPL) form a helical membrane-spanning segment. The Mitochondrial matrix segment spans residues 207–243 (DRLKVFMQVHASKTNRLNILGGLRSMVLEGGIRSLWR). The helical transmembrane segment at 244–263 (GNGINVLKIAPESAIKFMAY) threads the bilayer. At 264–286 (EQIKRAILGQQETLHVQERFVAG) the chain is on the mitochondrial intermembrane side. A helical membrane pass occupies residues 287–300 (SLAGATAQTIIYPM). Over 301-336 (EVLKTRLTLRRTGQYKGLLDCARRILEREGPRAFYR) the chain is Mitochondrial matrix. Residues 337 to 356 (GYLPNVLGIIPYAGIDLAVY) form a helical membrane-spanning segment. At 357 to 379 (ETLKNWWLQQYSHDSADPGILVL) the chain is on the mitochondrial intermembrane side. The chain crosses the membrane as a helical span at residues 380-397 (LACGTISSTCGQIASYPL). The Mitochondrial matrix segment spans residues 398-436 (ALVRTRMQAQASIEGGPQLSMLGLLRHILSQEGMRGLYR). Residues 437-456 (GIAPNFMKVIPAVSISYVVY) traverse the membrane as a helical segment. Over 457 to 468 (ENMKQALGVTSR) the chain is Mitochondrial intermembrane.

The protein belongs to the mitochondrial carrier (TC 2.A.29) family. Interacts with MCU. Interacts with MICU1. In terms of tissue distribution, expressed at low levels in most tissues examined, with highest expression in brain, skeletal muscle and pancreas.

It localises to the mitochondrion inner membrane. The enzyme catalyses Mg(2+)(out) + phosphate(in) + ATP(out) = Mg(2+)(in) + phosphate(out) + ATP(in). The catalysed reaction is ADP(out) + phosphate(in) + H(+)(out) = ADP(in) + phosphate(out) + H(+)(in). It carries out the reaction AMP(out) + phosphate(in) = AMP(in) + phosphate(out). It catalyses the reaction phosphate(in) + ATP(out) + 2 H(+)(out) = phosphate(out) + ATP(in) + 2 H(+)(in). The enzyme catalyses dADP(in) + ADP(out) = dADP(out) + ADP(in). The catalysed reaction is Mg(2+)(in) + ADP(out) + ATP(in) + H(+)(out) = Mg(2+)(out) + ADP(in) + ATP(out) + H(+)(in). It carries out the reaction ADP(out) + diphosphate(in) = ADP(in) + diphosphate(out). It catalyses the reaction dAMP(in) + ADP(out) + H(+)(out) = dAMP(out) + ADP(in) + H(+)(in). The enzyme catalyses 3'-AMP(in) + ADP(out) + H(+)(out) = 3'-AMP(out) + ADP(in) + H(+)(in). The catalysed reaction is dAMP(out) + phosphate(in) = dAMP(in) + phosphate(out). It carries out the reaction 3'-AMP(out) + phosphate(in) = 3'-AMP(in) + phosphate(out). It catalyses the reaction dADP(out) + phosphate(in) + H(+)(out) = dADP(in) + phosphate(out) + H(+)(in). With respect to regulation, activated by an increase in cytosolic calcium levels that induce a conformational change of the N-terminal regulatory domain, uncapping the channel and allowing transport. Inhibited by bathophenanthroline, mersalyl, p-hydroxymercuribenzoate, bromcresol purple, tannic acid, pyridoxal 5'-phosphate and p-hydroxymercuribenzoate. Its function is as follows. Electroneutral antiporter that mediates the transport of adenine nucleotides through the inner mitochondrial membrane. Originally identified as an ATP-magnesium/inorganic phosphate antiporter, it also acts as a broad specificity adenyl nucleotide antiporter. By regulating the mitochondrial matrix adenine nucleotide pool could adapt to changing cellular energetic demands and indirectly regulate adenine nucleotide-dependent metabolic pathways. Also acts as a regulator of mitochondrial calcium uptake and can probably transport trace amounts of other divalent metal cations in complex with ATP. In vitro, a low activity is also observed with guanyl and pyrimidine nucleotides. In Homo sapiens (Human), this protein is Mitochondrial adenyl nucleotide antiporter SLC25A23.